The chain runs to 122 residues: Small ribosomal subunit protein uS13 (122 aa).

The segment at 99–122 (RGQRTHTNARTRKGPAKAIAGKKK) is disordered.

This sequence belongs to the universal ribosomal protein uS13 family. In terms of assembly, part of the 30S ribosomal subunit. Forms a loose heterodimer with protein S19. Forms two bridges to the 50S subunit in the 70S ribosome.

Its function is as follows. Located at the top of the head of the 30S subunit, it contacts several helices of the 16S rRNA. In the 70S ribosome it contacts the 23S rRNA (bridge B1a) and protein L5 of the 50S subunit (bridge B1b), connecting the 2 subunits; these bridges are implicated in subunit movement. Contacts the tRNAs in the A and P-sites. In Rhizobium etli (strain CIAT 652), this protein is Small ribosomal subunit protein uS13.